The chain runs to 90 residues: Small ribosomal subunit protein uS15c (90 aa).

This sequence belongs to the universal ribosomal protein uS15 family. In terms of assembly, part of the 30S ribosomal subunit.

It localises to the plastid. Its subcellular location is the chloroplast. The protein is Small ribosomal subunit protein uS15c (rps15) of Acorus calamus (Sweet flag).